A 430-amino-acid polypeptide reads, in one-letter code: Serine--tRNA ligase (430 aa).

236 to 238 is a binding site for L-serine; it reads TAE. ATP is bound at residue 267–269; that stretch reads RSE. Glu290 serves as a coordination point for L-serine. 354-357 is an ATP binding site; that stretch reads EISS. Ser390 contributes to the L-serine binding site.

Belongs to the class-II aminoacyl-tRNA synthetase family. Type-1 seryl-tRNA synthetase subfamily. As to quaternary structure, homodimer. The tRNA molecule binds across the dimer.

It is found in the cytoplasm. The enzyme catalyses tRNA(Ser) + L-serine + ATP = L-seryl-tRNA(Ser) + AMP + diphosphate + H(+). It catalyses the reaction tRNA(Sec) + L-serine + ATP = L-seryl-tRNA(Sec) + AMP + diphosphate + H(+). It functions in the pathway aminoacyl-tRNA biosynthesis; selenocysteinyl-tRNA(Sec) biosynthesis; L-seryl-tRNA(Sec) from L-serine and tRNA(Sec): step 1/1. Catalyzes the attachment of serine to tRNA(Ser). Is also able to aminoacylate tRNA(Sec) with serine, to form the misacylated tRNA L-seryl-tRNA(Sec), which will be further converted into selenocysteinyl-tRNA(Sec). This chain is Serine--tRNA ligase, found in Mannheimia succiniciproducens (strain KCTC 0769BP / MBEL55E).